The sequence spans 69 residues: MLYPSIDALQRTIPSKYTIVTVAAKRARQIQDGKAPKVAEPKSYKPVGQALEELFSGDTTIIVNEKNNG.

The protein belongs to the RNA polymerase subunit omega family. As to quaternary structure, the RNAP catalytic core consists of 2 alpha, 1 beta, 1 beta' and 1 omega subunit. When a sigma factor is associated with the core the holoenzyme is formed, which can initiate transcription.

It catalyses the reaction RNA(n) + a ribonucleoside 5'-triphosphate = RNA(n+1) + diphosphate. Its function is as follows. Promotes RNA polymerase assembly. Latches the N- and C-terminal regions of the beta' subunit thereby facilitating its interaction with the beta and alpha subunits. This chain is DNA-directed RNA polymerase subunit omega, found in Exiguobacterium sp. (strain ATCC BAA-1283 / AT1b).